The following is a 286-amino-acid chain: NADP-dependent dehydrogenase clz5 (286 aa).

The NADP(+) site is built by serine 49, leucine 51, aspartate 93, tyrosine 207, lysine 211, isoleucine 241, and glutamine 245. Tyrosine 207 acts as the Proton acceptor in catalysis. Tyrosine 207 functions as the Proton donor in the catalytic mechanism. Lysine 211 functions as the Lowers pKa of active site Tyr in the catalytic mechanism.

This sequence belongs to the short-chain dehydrogenases/reductases (SDR) family. In terms of assembly, homodimer.

It is found in the cytoplasm. The protein localises to the cytosol. It functions in the pathway secondary metabolite biosynthesis. In terms of biological role, NADP-dependent dehydrogenase; part of the gene cluster that mediates the biosynthesis of squalestatin S1 (SQS1, also known as zaragozic acid A), a heavily oxidized fungal polyketide that offers potent cholesterol lowering activity by targeting squalene synthase (SS). SQS1 is composed of a 2,8-dioxobicyclic[3.2.1]octane-3,4,5-tricarboxyclic acid core that is connected to two lipophilic polyketide arms. These initial steps feature the priming of an unusual benzoic acid starter unit onto the highly reducing polyketide synthase clz14, followed by oxaloacetate extension and product release to generate a tricarboxylic acid containing product. The phenylalanine ammonia lyase (PAL) clz10 and the acyl-CoA ligase clz12 are involved in transforming phenylalanine into benzoyl-CoA. The citrate synthase-like protein clz17 is involved in connecting the C-alpha-carbons of the hexaketide chain and oxaloacetate to afford the tricarboxylic acid unit. The potential hydrolytic enzymes, clz11 and clz13, are in close proximity to pks2 and may participate in product release. On the other side, the tetraketide arm is synthesized by a the squalestatin tetraketide synthase clz2 and enzymatically esterified to the core in the last biosynthetic step, by the acetyltransferase clz6. The biosynthesis of the tetraketide must involve 3 rounds of chain extension. After the first and second rounds methyl-transfer occurs, and in all rounds of extension the ketoreductase and dehydratase are active. The enoyl reductase and C-MeT of clz2 are not active in the final round of extension. The acetyltransferase clz6 appears to have a broad substrate selectivity for its acyl CoA substrate, allowing the in vitro synthesis of novel squalestatins. The biosynthesis of SQS1 requires several oxidative steps likely performed by oxidoreductases clz3, clz15 and clz16. Finally, in support of the identification of the cluster as being responsible for SQS1 production, the cluster contains a gene encoding a putative squalene synthase (SS) clz20, suggesting a likely mechanism for self-resistance. The protein is NADP-dependent dehydrogenase clz5 of Cochliobolus lunatus (Filamentous fungus).